The chain runs to 77 residues: Omega-conotoxin-like 6 (77 aa).

The first 22 residues, 1–22 (MKLTCVVIIAVLLLTACQLITA), serve as a signal peptide directing secretion. The propeptide occupies 23–50 (DDSRGVQKHRSLRSTTKVSKSTSCMEAG). 3 disulfide bridges follow: Cys-46/Cys-61, Cys-53/Cys-64, and Cys-60/Cys-71.

The protein belongs to the conotoxin O1 superfamily. In terms of tissue distribution, expressed by the venom duct.

It is found in the secreted. In terms of biological role, omega-conotoxins act at presynaptic membranes, they bind and block voltage-gated calcium channels (Cav). The sequence is that of Omega-conotoxin-like 6 from Conus striatus (Striated cone).